The primary structure comprises 298 residues: Exosome complex component Rrp4 (298 aa).

Positions 63–131 (GDVVIGKIKD…EVKKVKLGLK (69 aa)) constitute an S1 motif domain. The region spanning 139 to 197 (RGGIIVDITPTKVPRLIGKKGSMINMIKDKTNCKIIVGQNGLVWVKGEEDMEQLTKDII) is the KH domain. Positions 276-298 (KNKKDKPLSYGNNSGNSYILNNR) are disordered. Polar residues predominate over residues 285-298 (YGNNSGNSYILNNR).

Belongs to the RRP4 family. Component of the archaeal exosome complex. Forms a trimer of Rrp4 and/or Csl4 subunits. The trimer associates with a hexameric ring-like arrangement composed of 3 Rrp41-Rrp42 heterodimers.

The protein resides in the cytoplasm. Functionally, non-catalytic component of the exosome, which is a complex involved in RNA degradation. Increases the RNA binding and the efficiency of RNA degradation. Confers strong poly(A) specificity to the exosome. In Methanobrevibacter smithii (strain ATCC 35061 / DSM 861 / OCM 144 / PS), this protein is Exosome complex component Rrp4.